The primary structure comprises 570 residues: Periplasmic trehalase (570 aa).

The first 34 residues, 1–34 (MITPALRHSGTLSFAIKLTVASTLLTFASLSAHA), serve as a signal peptide directing secretion. Substrate contacts are provided by residues Arg-157, 164–165 (WD), Asn-201, 210–212 (RSQ), 282–284 (RPE), and Gly-315. Active-site proton donor/acceptor residues include Asp-317 and Glu-501. Glu-516 lines the substrate pocket. Residues 542-570 (KPCDSVPATRPAAPGASQPAPQKQVETTP) form a disordered region. Positions 552–570 (PAAPGASQPAPQKQVETTP) are enriched in low complexity.

Belongs to the glycosyl hydrolase 37 family. In terms of assembly, monomer.

The protein localises to the periplasm. It carries out the reaction alpha,alpha-trehalose + H2O = alpha-D-glucose + beta-D-glucose. Functionally, provides the cells with the ability to utilize trehalose at high osmolarity by splitting it into glucose molecules that can subsequently be taken up by the phosphotransferase-mediated uptake system. This is Periplasmic trehalase from Citrobacter koseri (strain ATCC BAA-895 / CDC 4225-83 / SGSC4696).